Reading from the N-terminus, the 91-residue chain is Probable Fe(2+)-trafficking protein (91 aa).

Belongs to the Fe(2+)-trafficking protein family.

Its function is as follows. Could be a mediator in iron transactions between iron acquisition and iron-requiring processes, such as synthesis and/or repair of Fe-S clusters in biosynthetic enzymes. The polypeptide is Probable Fe(2+)-trafficking protein (Tolumonas auensis (strain DSM 9187 / NBRC 110442 / TA 4)).